The chain runs to 357 residues: S-adenosylmethionine:tRNA ribosyltransferase-isomerase (357 aa).

The protein belongs to the QueA family. Monomer.

The protein localises to the cytoplasm. The enzyme catalyses 7-aminomethyl-7-carbaguanosine(34) in tRNA + S-adenosyl-L-methionine = epoxyqueuosine(34) in tRNA + adenine + L-methionine + 2 H(+). The protein operates within tRNA modification; tRNA-queuosine biosynthesis. In terms of biological role, transfers and isomerizes the ribose moiety from AdoMet to the 7-aminomethyl group of 7-deazaguanine (preQ1-tRNA) to give epoxyqueuosine (oQ-tRNA). This Buchnera aphidicola subsp. Acyrthosiphon pisum (strain APS) (Acyrthosiphon pisum symbiotic bacterium) protein is S-adenosylmethionine:tRNA ribosyltransferase-isomerase.